Consider the following 242-residue polypeptide: Small ribosomal subunit protein uS3 (242 aa).

In terms of domain architecture, KH type-2 spans Ile39 to Glu110. The interval Gln216–Gly242 is disordered. Over residues Gln233–Gly242 the composition is skewed to basic and acidic residues.

Belongs to the universal ribosomal protein uS3 family. In terms of assembly, part of the 30S ribosomal subunit. Forms a tight complex with proteins S10 and S14.

Its function is as follows. Binds the lower part of the 30S subunit head. Binds mRNA in the 70S ribosome, positioning it for translation. The polypeptide is Small ribosomal subunit protein uS3 (Synechococcus sp. (strain CC9605)).